Reading from the N-terminus, the 136-residue chain is MSLTLRVLATDQNVFDGSADEVILPSTTGQLGILPGHISLLTAIDIGVLRVRANGAWNSIALMGGFAEVDADEVTVLVNKAELGSSIDAAAAETAFQKATIMVAGMEGQPSSPEKLKAQQQLNEARARLQASKTAD.

A disordered region spans residues 106-136; the sequence is MEGQPSSPEKLKAQQQLNEARARLQASKTAD.

This sequence belongs to the ATPase epsilon chain family. In terms of assembly, F-type ATPases have 2 components, CF(1) - the catalytic core - and CF(0) - the membrane proton channel. CF(1) has five subunits: alpha(3), beta(3), gamma(1), delta(1), epsilon(1). CF(0) has three main subunits: a, b and c.

Its subcellular location is the cellular thylakoid membrane. Its function is as follows. Produces ATP from ADP in the presence of a proton gradient across the membrane. The sequence is that of ATP synthase epsilon chain from Synechococcus sp. (strain CC9605).